The sequence spans 1040 residues: Multidrug resistance protein MdtB (1040 aa).

12 helical membrane passes run 16–36 (FIMRPVATTLLMVAILLAGII), 347–367 (LMMAIALVVMIIYLFLRNIPA), 369–389 (IIPGVAVPLSLIGTFAVMVFL), 396–416 (LTLMALTIATGFVVDDAIVVI), 440–460 (IGFTIISLTFSLIAVLIPLLF), 472–492 (FAITLAVAILISAVVSLTLTP), 537–557 (WLTLSVALSTLLLSVLLWVFI), 863–883 (LGSTVWLIVAAVVAMYIVLGI), 888–908 (FIHPITILSTLPTAGVGALLA), 911–931 (IAGSELDVIAIIGIILLIGIV), 968–988 (ILMTTLAALLGALPLMLSTGV), and 998–1018 (IGMVGGLVVSQVLTLFTTPVI).

It belongs to the resistance-nodulation-cell division (RND) (TC 2.A.6) family. MdtB subfamily. In terms of assembly, part of a tripartite efflux system composed of MdtA, MdtB and MdtC. MdtB forms a heteromultimer with MdtC.

The protein resides in the cell inner membrane. In terms of biological role, the MdtABC tripartite complex confers resistance against novobiocin and deoxycholate. This Escherichia fergusonii (strain ATCC 35469 / DSM 13698 / CCUG 18766 / IAM 14443 / JCM 21226 / LMG 7866 / NBRC 102419 / NCTC 12128 / CDC 0568-73) protein is Multidrug resistance protein MdtB.